Consider the following 440-residue polypeptide: uncharacterized protein (440 aa).

Residues 1–19 form the signal peptide; that stretch reads MKKLLLAASIVYFASACLA.

This is an uncharacterized protein from Rickettsia prowazekii (strain Madrid E).